The primary structure comprises 106 residues: MAKAEKGVSAKKIAQERVDILFERAKEARDEPELSARYVSLAREMAMKQRVRLAHYHRRSFCPSCHAYFIPGTNLRVRIQHGKIIYTCGICGAVTRIPLNKKTESR.

4 residues coordinate Zn(2+): Cys62, Cys65, Cys88, and Cys91.

The protein belongs to the eukaryotic/archaeal RNase P protein component 4 family. Consists of a catalytic RNA component and at least 4-5 protein subunits. Requires Zn(2+) as cofactor.

The protein localises to the cytoplasm. The catalysed reaction is Endonucleolytic cleavage of RNA, removing 5'-extranucleotides from tRNA precursor.. Functionally, part of ribonuclease P, a protein complex that generates mature tRNA molecules by cleaving their 5'-ends. The polypeptide is Ribonuclease P protein component 4 (Methanocorpusculum labreanum (strain ATCC 43576 / DSM 4855 / Z)).